The sequence spans 139 residues: D-ribose pyranase (139 aa).

Catalysis depends on histidine 20, which acts as the Proton donor. Substrate contacts are provided by residues aspartate 28, histidine 106, and 128-130 (YAN).

Belongs to the RbsD / FucU family. RbsD subfamily. In terms of assembly, homodecamer.

It localises to the cytoplasm. The enzyme catalyses beta-D-ribopyranose = beta-D-ribofuranose. It functions in the pathway carbohydrate metabolism; D-ribose degradation; D-ribose 5-phosphate from beta-D-ribopyranose: step 1/2. Catalyzes the interconversion of beta-pyran and beta-furan forms of D-ribose. This chain is D-ribose pyranase, found in Vibrio cholerae serotype O1 (strain ATCC 39541 / Classical Ogawa 395 / O395).